A 348-amino-acid polypeptide reads, in one-letter code: MKIILLYGGRSEEHDVSVLSAYSVLNAIYYKYYQVQLVFISKDGQWVKGPLLSERPQNKEVLHLTWAQTPEETGEFSGKRISPSEIYEEEAIVFPVLHGPNGEDGTIQGFMETINMPYVGAGVLASANAMDKIMTKYLLQTVGIPQVPFVPVLRSDWKGNPKEVFEKCEGSLIYPVFVKPANMGSSVGISKVENREELQEALEEAFRYDARAIVEQGIEAREIEVAILGNEDVRTTLPGEVVKDVAFYDYDAKYINNTIEMQIPAHVPEEVAHQAQEYAKKAYIMLDGSGLSRCDFFLTSKNELFLNELNTMPGFTDFSMYPLLWENMGLKYSDLIEELIQLALNRFK.

Positions 136 to 341 constitute an ATP-grasp domain; it reads KYLLQTVGIP…YSDLIEELIQ (206 aa). 169 to 224 is an ATP binding site; that stretch reads EGSLIYPVFVKPANMGSSVGISKVENREELQEALEEAFRYDARAIVEQGIEAREIE. Residues Asp295, Glu308, and Asn310 each contribute to the Mg(2+) site.

This sequence belongs to the D-alanine--D-alanine ligase family. Mg(2+) serves as cofactor. Requires Mn(2+) as cofactor.

The protein localises to the cytoplasm. The catalysed reaction is 2 D-alanine + ATP = D-alanyl-D-alanine + ADP + phosphate + H(+). Its pathway is cell wall biogenesis; peptidoglycan biosynthesis. Functionally, cell wall formation. In Enterococcus faecalis (strain ATCC 700802 / V583), this protein is D-alanine--D-alanine ligase (ddl).